A 230-amino-acid chain; its full sequence is ATP phosphoribosyltransferase (230 aa).

This sequence belongs to the ATP phosphoribosyltransferase family. Short subfamily. In terms of assembly, heteromultimer composed of HisG and HisZ subunits.

The protein resides in the cytoplasm. The enzyme catalyses 1-(5-phospho-beta-D-ribosyl)-ATP + diphosphate = 5-phospho-alpha-D-ribose 1-diphosphate + ATP. It participates in amino-acid biosynthesis; L-histidine biosynthesis; L-histidine from 5-phospho-alpha-D-ribose 1-diphosphate: step 1/9. In terms of biological role, catalyzes the condensation of ATP and 5-phosphoribose 1-diphosphate to form N'-(5'-phosphoribosyl)-ATP (PR-ATP). Has a crucial role in the pathway because the rate of histidine biosynthesis seems to be controlled primarily by regulation of HisG enzymatic activity. The protein is ATP phosphoribosyltransferase of Agrobacterium fabrum (strain C58 / ATCC 33970) (Agrobacterium tumefaciens (strain C58)).